The chain runs to 469 residues: Putative multidrug resistance protein MdtD (469 aa).

The next 13 helical transmembrane spans lie at 8–28 (LWIV…VNTA), 45–65 (SVIV…GWLA), 68–88 (VGVK…SLLC), 102–122 (VIQG…VMKI), 134–154 (FVTL…GFLV), 161–181 (WIFL…LWLM), 191–211 (FDIS…LALD), 215–235 (GLGL…LALA), 263–283 (LIGS…TPVF), 286–306 (IGLG…IIGS), 338–358 (LSFP…VLFF), 392–412 (MVMQ…LGVF), and 426–446 (SAFL…ALIF).

This sequence belongs to the major facilitator superfamily. TCR/Tet family.

The protein resides in the cell inner membrane. The chain is Putative multidrug resistance protein MdtD from Yersinia enterocolitica serotype O:8 / biotype 1B (strain NCTC 13174 / 8081).